The primary structure comprises 506 residues: Chromosomal replication initiator protein DnaA (506 aa).

Positions 1–77 (MECATTATTP…IWAEESGAKR (77 aa)) are domain I, interacts with DnaA modulators. A domain II region spans residues 77–162 (RRVDLAVRNA…AVAGDVASGS (86 aa)). Basic and acidic residues-rich tracts occupy residues 103–112 (TERTDMHSGD) and 121–142 (SDGRSTDARGADGRGSDARAVE). Residues 103-142 (TERTDMHSGDTRQQSARISDGRSTDARGADGRGSDARAVE) form a disordered region. The tract at residues 163 to 384 (PLDARLTFET…GALNKLLAFN (222 aa)) is domain III, AAA+ region. Residues Gly210, Gly212, Lys213, and Thr214 each coordinate ATP. Residues 385 to 506 (QLTGEPVTLE…EVLKRLALEA (122 aa)) are domain IV, binds dsDNA.

It belongs to the DnaA family. Oligomerizes as a right-handed, spiral filament on DNA at oriC.

The protein resides in the cytoplasm. Plays an essential role in the initiation and regulation of chromosomal replication. ATP-DnaA binds to the origin of replication (oriC) to initiate formation of the DNA replication initiation complex once per cell cycle. Binds the DnaA box (a 9 base pair repeat at the origin) and separates the double-stranded (ds)DNA. Forms a right-handed helical filament on oriC DNA; dsDNA binds to the exterior of the filament while single-stranded (ss)DNA is stabiized in the filament's interior. The ATP-DnaA-oriC complex binds and stabilizes one strand of the AT-rich DNA unwinding element (DUE), permitting loading of DNA polymerase. After initiation quickly degrades to an ADP-DnaA complex that is not apt for DNA replication. Binds acidic phospholipids. The polypeptide is Chromosomal replication initiator protein DnaA (Xanthobacter autotrophicus (strain ATCC BAA-1158 / Py2)).